Consider the following 135-residue polypeptide: Ig heavy chain V region XIG14 (135 aa).

Positions 1–18 (DFIIFFIFMFFSPSCILS) are cleaved as a signal peptide. The 109-residue stretch at 20-128 (TLQESGPGTV…GYNFDYWGQG (109 aa)) folds into the Ig-like domain.

The chain is Ig heavy chain V region XIG14 from Xenopus laevis (African clawed frog).